The following is a 158-amino-acid chain: NADPH-dependent 7-cyano-7-deazaguanine reductase (158 aa).

The tract at residues Met-1 to Pro-37 is disordered. Residues Glu-27 to Pro-37 are compositionally biased toward basic and acidic residues. Cys-56 acts as the Thioimide intermediate in catalysis. Asp-63 serves as the catalytic Proton donor. Substrate contacts are provided by residues Val-78–Ser-80 and His-97–Glu-98.

Belongs to the GTP cyclohydrolase I family. QueF type 1 subfamily.

The protein resides in the cytoplasm. The enzyme catalyses 7-aminomethyl-7-carbaguanine + 2 NADP(+) = 7-cyano-7-deazaguanine + 2 NADPH + 3 H(+). It participates in tRNA modification; tRNA-queuosine biosynthesis. Catalyzes the NADPH-dependent reduction of 7-cyano-7-deazaguanine (preQ0) to 7-aminomethyl-7-deazaguanine (preQ1). This Bradyrhizobium sp. (strain BTAi1 / ATCC BAA-1182) protein is NADPH-dependent 7-cyano-7-deazaguanine reductase.